A 378-amino-acid chain; its full sequence is Alpha-galactosidase (378 aa).

The signal sequence occupies residues 1 to 15 (MVKSPGTEDYTRRSL). 2 disulfide bridges follow: Cys36–Cys68 and Cys116–Cys147. Catalysis depends on Asp145, which acts as the Nucleophile. 178–182 (EWGEE) serves as a coordination point for substrate. Asp200 serves as the catalytic Proton donor.

Belongs to the glycosyl hydrolase 27 family.

It catalyses the reaction Hydrolysis of terminal, non-reducing alpha-D-galactose residues in alpha-D-galactosides, including galactose oligosaccharides, galactomannans and galactolipids.. Functionally, preferentially cleaves alpha-1,3 and alpha-1,4 glycoside linkages. Involved in the hydrolysis of the galactomannan, it splits alpha-linked galactose moieties. It is particularly suitable for the hydrolysis of guar gum to a gum with improved gelling properties. Can cleave terminal alpha-1,3-linked galactose residues responsible for blood group B specificity from the surface of erythrocytes thereby converting these cells serologically to group O. This is Alpha-galactosidase from Coffea arabica (Arabian coffee).